The following is an 81-amino-acid chain: ATP synthase subunit c, chloroplastic (81 aa).

2 helical membrane passes run 3–23 (PLIS…ASIG) and 57–77 (LAFM…LLFA).

The protein belongs to the ATPase C chain family. As to quaternary structure, F-type ATPases have 2 components, F(1) - the catalytic core - and F(0) - the membrane proton channel. F(1) has five subunits: alpha(3), beta(3), gamma(1), delta(1), epsilon(1). F(0) has four main subunits: a(1), b(1), b'(1) and c(10-14). The alpha and beta chains form an alternating ring which encloses part of the gamma chain. F(1) is attached to F(0) by a central stalk formed by the gamma and epsilon chains, while a peripheral stalk is formed by the delta, b and b' chains.

Its subcellular location is the plastid. The protein resides in the chloroplast thylakoid membrane. Its function is as follows. F(1)F(0) ATP synthase produces ATP from ADP in the presence of a proton or sodium gradient. F-type ATPases consist of two structural domains, F(1) containing the extramembraneous catalytic core and F(0) containing the membrane proton channel, linked together by a central stalk and a peripheral stalk. During catalysis, ATP synthesis in the catalytic domain of F(1) is coupled via a rotary mechanism of the central stalk subunits to proton translocation. In terms of biological role, key component of the F(0) channel; it plays a direct role in translocation across the membrane. A homomeric c-ring of between 10-14 subunits forms the central stalk rotor element with the F(1) delta and epsilon subunits. The protein is ATP synthase subunit c, chloroplastic of Ceratophyllum demersum (Rigid hornwort).